A 2555-amino-acid polypeptide reads, in one-letter code: Ubiquitin carboxyl-terminal hydrolase 9Y (2555 aa).

The segment at 1–66 (MTAITHGSPV…APPQHEDEEP (66 aa)) is disordered. The segment covering 13-45 (NDSQGQVLDGQSQHLFQQNQTSSPDSSNENSVA) has biased composition (polar residues). Ser589 bears the Phosphoserine mark. The residue at position 591 (Thr591) is a Phosphothreonine. Residues 972 to 997 (NMPSSPDSSSDSSTASPGNHRNHYND) form a disordered region. A compositionally biased stretch (low complexity) spans 974–984 (PSSPDSSSDSS). A USP domain is found at 1559-1958 (VGLKNAGATC…NAYILFYEQM (400 aa)). Cys1568 functions as the Nucleophile in the catalytic mechanism. Zn(2+)-binding residues include Cys1729, His1731, Cys1773, and Cys1776. Catalysis depends on His1881, which acts as the Proton acceptor. Ser2444 carries the phosphoserine modification. A compositionally biased stretch (acidic residues) spans 2476-2485 (PEEEPDDQDA). The interval 2476-2555 (PEEEPDDQDA…EVSSPQMKDQ (80 aa)) is disordered. 2 stretches are compositionally biased toward polar residues: residues 2504–2514 (PASQYQQNNHV) and 2528–2555 (NNPQKTGQRTQENYEGNEEVSSPQMKDQ). The residue at position 2541 (Tyr2541) is a Phosphotyrosine. Phosphoserine is present on Ser2548.

Belongs to the peptidase C19 family. As to expression, widely expressed in embryonic and adult tissues.

The enzyme catalyses Thiol-dependent hydrolysis of ester, thioester, amide, peptide and isopeptide bonds formed by the C-terminal Gly of ubiquitin (a 76-residue protein attached to proteins as an intracellular targeting signal).. It participates in protein modification; protein ubiquitination. Functionally, deubiquitinase that mediates deubiquitination of target proteins. May stabilize target proteins that are important for male germ cell development. The sequence is that of Ubiquitin carboxyl-terminal hydrolase 9Y from Homo sapiens (Human).